Reading from the N-terminus, the 443-residue chain is Mimosinase, chloroplastic (443 aa).

The N-terminal 43 residues, 1–43 (MALSSTFLNPLVSSVAVNPQPKITSGKGFRVNCLIRTQQTVIK), are a transit peptide targeting the chloroplast. Positions 105, 107, 135, 136, 254, and 256 each coordinate pyridoxal 5'-phosphate. Position 257 is an N6-(pyridoxal phosphate)lysine (Lys-257).

Belongs to the trans-sulfuration enzymes family. Forms homodimers. May form homotetramers from two homodimers. Pyridoxal 5'-phosphate is required as a cofactor.

The protein localises to the plastid. The protein resides in the chloroplast. The catalysed reaction is L-mimosine + H2O = 3-hydroxy-4H-pyrid-4-one + pyruvate + NH4(+). In terms of biological role, catalyzes the degradation of mimosine, which is a toxic secondary metabolite found in all Leucaena and Mimosa species. The polypeptide is Mimosinase, chloroplastic (Leucaena leucocephala (White popinac)).